The chain runs to 1084 residues: Transcription elongation factor SPT5 (1084 aa).

Residues 1 to 91 (MSDSEDSDFS…DDEYEDEDPW (91 aa)) form a disordered region. Acidic residues-rich tracts occupy residues 20 to 32 (AEEV…EEEQ), 41 to 62 (AEEE…EEDD), and 77 to 91 (DEAD…EDPW). Positions 175–269 (DPNLWTVKCK…TDVLKVVKEV (95 aa)) are interaction with SUPT4H1. KOW domains follow at residues 272-305 (LKPK…ISLK), 419-450 (LQAG…ITIM), 471-502 (FRMG…VILF), and 593-626 (IHVK…LHCK). The interval 312 to 419 (LDRIKARMSM…TTGKEREHNL (108 aa)) is interaction with RNA polymerase II. Position 665 is a phosphoserine (Ser665). Residues 667 to 700 (RISSPMHPGGGGQPQRGGGGGGGGGMGRGRGRRD) are disordered. The segment covering 674–694 (PGGGGQPQRGGGGGGGGGMGR) has biased composition (gly residues). Positions 702–735 (DLIGQTVRISQGPYKGYIGVVKDATESTARVELH) constitute a KOW 5 domain. The disordered stretch occupies residues 748–973 (LTTVGGKERQ…HTPGSNIDQA (226 aa)). One copy of the CTR1-1; approximate repeat lies at 758 to 763 (GRSSTH). The segment at 758 to 815 (GRSSTHLRTPMYGSQTPIYGTGSRTPMYGSQTPLHDGSRTPHYGSQTPLHDGSRTPGQ) is 8 X 7 AA approximate tandem repeats of G-S-[QR]-T-P-X-[YQ], motif CTR1. Positions 759-790 (RSSTHLRTPMYGSQTPIYGTGSRTPMYGSQTP) are enriched in polar residues. Residues 764–769 (LRTPMY) form a CTR1-2; approximate repeat. One copy of the CTR1-3 repeat lies at 770–776 (GSQTPIY). 2 positions are modified to phosphothreonine; by CDK9: Thr773 and Thr782. Residues 779–785 (GSRTPMY) form a CTR1-4 repeat. One copy of the CTR1-5 repeat lies at 786 to 792 (GSQTPLH). The CTR1-6 repeat unit spans residues 794–800 (GSRTPHY). A CTR1-7 repeat occupies 801–807 (GSQTPLH). The CTR1-8 repeat unit spans residues 809–815 (GSRTPGQ). Acidic residues predominate over residues 832 to 842 (DEYEFAYDDEP). One copy of the CTR2-1 repeat lies at 842 to 849 (PSPSPQGY). The segment at 842-948 (PSPSPQGYGG…ASPSPSPVGY (107 aa)) is 10 X 8 AA approximate tandem repeats of P-[TS]-P-S-P-[QA]-[SG]-Y, motif CTR2. Residues 852 to 860 (TPNPQTPGY) form a CTR2-2; approximate repeat. Positions 855–864 (PQTPGYPEVP) are enriched in pro residues. Residues 861–867 (PEVPSPQ) form a CTR2-3; approximate repeat. Over residues 866 to 888 (PQVNPQYNPQTPGTPAMYNTDQY) the composition is skewed to polar residues. The stretch at 879–883 (TPAMY) is one CTR2-4; half-length repeat. The stretch at 894–900 (PSPQGSY) is one CTR2-5; approximate repeat. Residues 894–909 (PSPQGSYQPSPSPQSY) are compositionally biased toward low complexity. The stretch at 902-909 (PSPSPQSY) is one CTR2-6 repeat. The CTR2-7; approximate repeat unit spans residues 914-919 (PSPVGY). One copy of the CTR2-8 repeat lies at 922–928 (THSPASY). The stretch at 930–937 (PTPSPMAY) is one CTR2-9 repeat. One copy of the CTR2-10 repeat lies at 941 to 948 (PSPSPVGY).

Belongs to the SPT5 family. In terms of assembly, interacts with SUPT4H1 to form the DSIF complex. DSIF interacts with RNA polymerase II and with the positive transcription elongation factor b complex (P-TEFb complex), which is composed of CDK9 and cyclin-T. Post-translationally, phosphorylated. Phosphorylation by P-TEFb (CDK9) at Thr residues of the C-terminal repeats alleviates transcriptional pausing and promotes transcription elongation.

It is found in the nucleus. In terms of biological role, component of the DRB sensitivity-inducing factor complex (DSIF complex), which regulates mRNA processing and transcription elongation by RNA polymerase II. DSIF positively regulates mRNA capping by stimulating the mRNA guanylyltransferase activity of RNGTT/CAP1A. DSIF also acts cooperatively with the negative elongation factor complex (NELF complex) to enhance transcriptional pausing at sites proximal to the promoter. Transcriptional pausing may facilitate the assembly of an elongation competent RNA polymerase II complex. DSIF and NELF promote pausing by inhibition of the transcription elongation factor TFIIS/S-II. TFIIS/S-II binds to RNA polymerase II at transcription pause sites and stimulates the weak intrinsic nuclease activity of the enzyme. Cleavage of blocked transcripts by RNA polymerase II promotes the resumption of transcription from the new 3' terminus and may allow repeated attempts at transcription through natural pause sites. Following phosphorylation by CDK9, DSIF can also positively regulate transcriptional elongation. Regulation of transcriptional elongation by this protein is required for the expression of genes which control neuronal development. This is Transcription elongation factor SPT5 (supt5h) from Danio rerio (Zebrafish).